We begin with the raw amino-acid sequence, 446 residues long: Coiled-coil domain-containing protein 112 (446 aa).

Coiled coils occupy residues 35 to 116 and 219 to 400; these read KTER…RKID and ERKK…NVSR. Disordered regions lie at residues 253–272 and 390–430; these read FHNKQEDNQKQKEEQRKKQK and LKEK…LLHI. Over residues 255-268 the composition is skewed to basic and acidic residues; the sequence is NKQEDNQKQKEEQR.

Its subcellular location is the cytoplasm. It localises to the cytoskeleton. The protein resides in the microtubule organizing center. The protein localises to the centrosome. It is found in the centriolar satellite. The protein is Coiled-coil domain-containing protein 112 (CCDC112) of Homo sapiens (Human).